Here is a 345-residue protein sequence, read N- to C-terminus: Phosphoribosylformylglycinamidine cyclo-ligase (345 aa).

Belongs to the AIR synthase family.

It localises to the cytoplasm. It catalyses the reaction 2-formamido-N(1)-(5-O-phospho-beta-D-ribosyl)acetamidine + ATP = 5-amino-1-(5-phospho-beta-D-ribosyl)imidazole + ADP + phosphate + H(+). The protein operates within purine metabolism; IMP biosynthesis via de novo pathway; 5-amino-1-(5-phospho-D-ribosyl)imidazole from N(2)-formyl-N(1)-(5-phospho-D-ribosyl)glycinamide: step 2/2. This Synechococcus sp. (strain CC9605) protein is Phosphoribosylformylglycinamidine cyclo-ligase.